The sequence spans 349 residues: Heme A synthase (349 aa).

A run of 5 helical transmembrane segments spans residues 15-35 (AVQVWLYAVAALIVLMVVVGG), 101-121 (LLGRVIGLAFFLPFLYFALTG), 132-152 (FGLFLLGGLQGAVGWWMVASG), 162-182 (YRLAVHLTLACIILTAIVAVA), and 203-223 (VLVGLVLLQIFAGGLVAGLDA). A heme-binding site is contributed by histidine 265. Helical transmembrane passes span 268-288 (IAYLIFALAFLHLLDCLRLGG), 296-316 (LVFALVAAQAMLGILTLVHMV), and 317-337 (PLDLALAHQLGATLVLIAAMI). Histidine 324 is a heme binding site.

The protein belongs to the COX15/CtaA family. Type 2 subfamily. Interacts with CtaB. Heme b serves as cofactor.

It localises to the cell membrane. It carries out the reaction Fe(II)-heme o + 2 A + H2O = Fe(II)-heme a + 2 AH2. It participates in porphyrin-containing compound metabolism; heme A biosynthesis; heme A from heme O: step 1/1. Catalyzes the conversion of heme O to heme A by two successive hydroxylations of the methyl group at C8. The first hydroxylation forms heme I, the second hydroxylation results in an unstable dihydroxymethyl group, which spontaneously dehydrates, resulting in the formyl group of heme A. In Azorhizobium caulinodans (strain ATCC 43989 / DSM 5975 / JCM 20966 / LMG 6465 / NBRC 14845 / NCIMB 13405 / ORS 571), this protein is Heme A synthase.